Here is a 386-residue protein sequence, read N- to C-terminus: Mannitol-1-phosphate 5-dehydrogenase (386 aa).

Residue 3–14 (AVHFGAGNIGRG) coordinates NAD(+).

The protein belongs to the mannitol dehydrogenase family.

The enzyme catalyses D-mannitol 1-phosphate + NAD(+) = beta-D-fructose 6-phosphate + NADH + H(+). The protein is Mannitol-1-phosphate 5-dehydrogenase of Brevibacillus brevis (strain 47 / JCM 6285 / NBRC 100599).